We begin with the raw amino-acid sequence, 648 residues long: Cysteine-rich receptor-like protein kinase 38 (648 aa).

The N-terminal stretch at 1–25 (MKNSAAIFLTSSLILLLQTLHGVKA) is a signal peptide. 2 consecutive Gnk2-homologous domains span residues 26–127 (GFIC…DQST) and 140–247 (PSPV…FYPF). Topologically, residues 26–278 (GFICVGSSFP…EAISITRLKG (253 aa)) are extracellular. Asn-37, Asn-63, Asn-151, Asn-174, and Asn-253 each carry an N-linked (GlcNAc...) asparagine glycan. Residues 279–299 (GIIAIFVVPIVINLLVFIGLI) traverse the membrane as a helical segment. Topologically, residues 300–648 (RAYTRIRKSY…ELSITELSPR (349 aa)) are cytoplasmic. In terms of domain architecture, Protein kinase spans 339–611 (FSFENKIGQG…VIQWLGSETI (273 aa)). ATP is bound by residues 345–353 (IGQGGFGSV) and Lys-367. Tyr-412 is modified (phosphotyrosine). Asp-464 (proton acceptor) is an active-site residue. At Ser-468 the chain carries Phosphoserine. At Thr-504 the chain carries Phosphothreonine. Tyr-512 carries the phosphotyrosine modification.

This sequence belongs to the protein kinase superfamily. Ser/Thr protein kinase family. CRK subfamily.

The protein localises to the membrane. It carries out the reaction L-seryl-[protein] + ATP = O-phospho-L-seryl-[protein] + ADP + H(+). It catalyses the reaction L-threonyl-[protein] + ATP = O-phospho-L-threonyl-[protein] + ADP + H(+). The sequence is that of Cysteine-rich receptor-like protein kinase 38 (CRK38) from Arabidopsis thaliana (Mouse-ear cress).